Reading from the N-terminus, the 228-residue chain is Lipoprotein-releasing system ATP-binding protein LolD (228 aa).

Residues 6 to 228 enclose the ABC transporter domain; the sequence is LRLSGIEKTY…LSDGRLSAES (223 aa). 43–50 is a binding site for ATP; it reads APSGAGKS.

This sequence belongs to the ABC transporter superfamily. Lipoprotein translocase (TC 3.A.1.125) family. In terms of assembly, the complex is composed of two ATP-binding proteins (LolD) and two transmembrane proteins (LolC and LolE).

The protein resides in the cell inner membrane. Functionally, part of the ABC transporter complex LolCDE involved in the translocation of mature outer membrane-directed lipoproteins, from the inner membrane to the periplasmic chaperone, LolA. Responsible for the formation of the LolA-lipoprotein complex in an ATP-dependent manner. This is Lipoprotein-releasing system ATP-binding protein LolD from Ruegeria pomeroyi (strain ATCC 700808 / DSM 15171 / DSS-3) (Silicibacter pomeroyi).